Here is a 199-residue protein sequence, read N- to C-terminus: NAD(P)H dehydrogenase (quinone) (199 aa).

Residues 4-190 (ILVLYYSMYG…AIARFQGEHV (187 aa)) enclose the Flavodoxin-like domain. Residues 10–15 (SMYGHI) and 79–81 (TRF) contribute to the FMN site. An NAD(+)-binding site is contributed by Tyr-12. Trp-99 lines the substrate pocket. Residues 114 to 119 (STGTGG) and His-134 contribute to the FMN site.

The protein belongs to the WrbA family. The cofactor is FMN.

It catalyses the reaction a quinone + NADH + H(+) = a quinol + NAD(+). The enzyme catalyses a quinone + NADPH + H(+) = a quinol + NADP(+). The sequence is that of NAD(P)H dehydrogenase (quinone) from Yersinia enterocolitica serotype O:8 / biotype 1B (strain NCTC 13174 / 8081).